Consider the following 321-residue polypeptide: MGELPLDINIQEPRWDQSTFLGRARHFFTVTDPRNLLLSGAQLEASRNIVQNYRAGVVTPGITEDQLWRAKYVYDSAFHPDTGEKVVLIGRMSAQVPMNMTITGCMLTFYRKTPTVVFWQWVNQSFNAIVNYSNRSGDTPITVRQLGTAYVSATTGAVATALGLKSLTKHLPPLVGRFVPFAAVAAANCINIPLMRQRELQVGIPVADEAGQRLGYSVTAAKQGIFQVVISRICMAIPAMAIPPLIMDTLEKKDFLKRRPWLGAPLQVGLVGFCLVFATPLCCALFPQKSSIHISNLEPELRAQIHEQNPSVEVVYYNKGL.

Position 1 is an N-acetylmethionine (Met1). A run of 4 helical transmembrane segments spans residues 146-164 (LGTA…ALGL), 174-194 (LVGR…NIPL), 226-246 (FQVV…PPLI), and 266-286 (LQVG…CALF).

It belongs to the sideroflexin family.

It localises to the mitochondrion membrane. The catalysed reaction is L-serine(in) = L-serine(out). In terms of biological role, mitochondrial serine transporter that mediates transport of serine into mitochondria, an important step of the one-carbon metabolism pathway. Mitochondrial serine is converted to glycine and formate, which then exits to the cytosol where it is used to generate the charged folates that serve as one-carbon donors. This Homo sapiens (Human) protein is Sideroflexin-3.